We begin with the raw amino-acid sequence, 348 residues long: Dihydroorotase (348 aa).

The Zn(2+) site is built by His17 and His19. Substrate contacts are provided by residues 19–21 (HLR) and Asn45. Lys103, His140, and His178 together coordinate Zn(2+). An N6-carboxylysine modification is found at Lys103. Position 140 (His140) interacts with substrate. Leu223 provides a ligand contact to substrate. Asp251 lines the Zn(2+) pocket. Asp251 is a catalytic residue. His255 and Ala267 together coordinate substrate.

It belongs to the metallo-dependent hydrolases superfamily. DHOase family. Class II DHOase subfamily. Homodimer. The cofactor is Zn(2+).

The catalysed reaction is (S)-dihydroorotate + H2O = N-carbamoyl-L-aspartate + H(+). It participates in pyrimidine metabolism; UMP biosynthesis via de novo pathway; (S)-dihydroorotate from bicarbonate: step 3/3. Its function is as follows. Catalyzes the reversible cyclization of carbamoyl aspartate to dihydroorotate. In Escherichia coli O7:K1 (strain IAI39 / ExPEC), this protein is Dihydroorotase.